The sequence spans 177 residues: MSRVAKAPVVVPAGVDVKVNGQVITIKGKNGELTRTLNDAVEVKHADNALTFGPRDGYVDGWAQAGTARALLNSMVIGVTEGFTKKLQLVGVGYRAAVKGDVVNLALGFSHPVEHKLPAGITAECPTQTEIVLKGADKQVIGQVAADLRAYRRPEPYKGKGVRYADEVVRTKEAKKK.

It belongs to the universal ribosomal protein uL6 family. In terms of assembly, part of the 50S ribosomal subunit.

Functionally, this protein binds to the 23S rRNA, and is important in its secondary structure. It is located near the subunit interface in the base of the L7/L12 stalk, and near the tRNA binding site of the peptidyltransferase center. The protein is Large ribosomal subunit protein uL6 of Klebsiella pneumoniae (strain 342).